The following is a 273-amino-acid chain: Putative pyruvate, phosphate dikinase regulatory protein (273 aa).

153 to 160 (GISRTSKT) contributes to the ADP binding site.

Belongs to the pyruvate, phosphate/water dikinase regulatory protein family. PDRP subfamily.

The catalysed reaction is N(tele)-phospho-L-histidyl/L-threonyl-[pyruvate, phosphate dikinase] + ADP = N(tele)-phospho-L-histidyl/O-phospho-L-threonyl-[pyruvate, phosphate dikinase] + AMP + H(+). It catalyses the reaction N(tele)-phospho-L-histidyl/O-phospho-L-threonyl-[pyruvate, phosphate dikinase] + phosphate + H(+) = N(tele)-phospho-L-histidyl/L-threonyl-[pyruvate, phosphate dikinase] + diphosphate. Its function is as follows. Bifunctional serine/threonine kinase and phosphorylase involved in the regulation of the pyruvate, phosphate dikinase (PPDK) by catalyzing its phosphorylation/dephosphorylation. This is Putative pyruvate, phosphate dikinase regulatory protein from Rhizobium etli (strain ATCC 51251 / DSM 11541 / JCM 21823 / NBRC 15573 / CFN 42).